We begin with the raw amino-acid sequence, 306 residues long: MNPSPPSAAATPSSARAPSRFSQFYALTKPRVVQLIVFCALIGMVLAVPGVPTWLDVRLALIACAGIWLVAGAAAAFNCLVEQQIDAKMRRTAWRPTARGQLSNPLTLAFSAGLCALGSWVLYVWVNPLTMWLTFATFVGYAVVYTVILKPLTPQNIVIGGASGAMPPVLGWAAMTGSVGPEALILFLIIFLWTPPHFWALALYRVEDYRKAGLPMLPVTHGNEFTRLQVFLYTLVLFPACLMPFIFKMSGWLYLVAAVLLSIGFSGHAWCLWRNYSDALARKTFRFSLIHLSALFAALLLDHYLI.

Transmembrane regions (helical) follow at residues 35-55, 61-81, 106-126, 129-149, 157-177, 183-203, 224-244, 245-265, and 286-306; these read LIVF…PTWL, LIAC…NCLV, LTLA…YVWV, LTMW…TVIL, IVIG…AMTG, ALIL…ALAL, EFTR…CLMP, FIFK…SIGF, and RFSL…HYLI.

Belongs to the UbiA prenyltransferase family. Protoheme IX farnesyltransferase subfamily.

It is found in the cell inner membrane. It catalyses the reaction heme b + (2E,6E)-farnesyl diphosphate + H2O = Fe(II)-heme o + diphosphate. The protein operates within porphyrin-containing compound metabolism; heme O biosynthesis; heme O from protoheme: step 1/1. Converts heme B (protoheme IX) to heme O by substitution of the vinyl group on carbon 2 of heme B porphyrin ring with a hydroxyethyl farnesyl side group. This Polaromonas naphthalenivorans (strain CJ2) protein is Protoheme IX farnesyltransferase.